Here is a 318-residue protein sequence, read N- to C-terminus: Transaldolase (318 aa).

The active-site Schiff-base intermediate with substrate is lysine 132.

Belongs to the transaldolase family. Type 1 subfamily. As to quaternary structure, homodimer.

The protein resides in the cytoplasm. The enzyme catalyses D-sedoheptulose 7-phosphate + D-glyceraldehyde 3-phosphate = D-erythrose 4-phosphate + beta-D-fructose 6-phosphate. Its pathway is carbohydrate degradation; pentose phosphate pathway; D-glyceraldehyde 3-phosphate and beta-D-fructose 6-phosphate from D-ribose 5-phosphate and D-xylulose 5-phosphate (non-oxidative stage): step 2/3. Its function is as follows. Transaldolase is important for the balance of metabolites in the pentose-phosphate pathway. The chain is Transaldolase from Shewanella sediminis (strain HAW-EB3).